Here is a 317-residue protein sequence, read N- to C-terminus: Methionyl-tRNA formyltransferase (317 aa).

112–115 (SLLP) contacts (6S)-5,6,7,8-tetrahydrofolate.

This sequence belongs to the Fmt family.

It catalyses the reaction L-methionyl-tRNA(fMet) + (6R)-10-formyltetrahydrofolate = N-formyl-L-methionyl-tRNA(fMet) + (6S)-5,6,7,8-tetrahydrofolate + H(+). Its function is as follows. Attaches a formyl group to the free amino group of methionyl-tRNA(fMet). The formyl group appears to play a dual role in the initiator identity of N-formylmethionyl-tRNA by promoting its recognition by IF2 and preventing the misappropriation of this tRNA by the elongation apparatus. The polypeptide is Methionyl-tRNA formyltransferase (Mesorhizobium japonicum (strain LMG 29417 / CECT 9101 / MAFF 303099) (Mesorhizobium loti (strain MAFF 303099))).